The sequence spans 455 residues: Ribosomal protein uS12 methylthiotransferase RimO (455 aa).

One can recognise an MTTase N-terminal domain in the interval 10-120 (PKVGMVSLGC…VVEAVHDAAP (111 aa)). [4Fe-4S] cluster contacts are provided by C19, C55, C84, C151, C155, and C158. Residues 137–380 (LTPRHYSYLK…MAKTAAISAA (244 aa)) form the Radical SAM core domain. One can recognise a TRAM domain in the interval 383 to 455 (EAKIGRTLPV…DEHDLFGVVT (73 aa)).

The protein belongs to the methylthiotransferase family. RimO subfamily. [4Fe-4S] cluster is required as a cofactor.

Its subcellular location is the cytoplasm. It carries out the reaction L-aspartate(89)-[ribosomal protein uS12]-hydrogen + (sulfur carrier)-SH + AH2 + 2 S-adenosyl-L-methionine = 3-methylsulfanyl-L-aspartate(89)-[ribosomal protein uS12]-hydrogen + (sulfur carrier)-H + 5'-deoxyadenosine + L-methionine + A + S-adenosyl-L-homocysteine + 2 H(+). Its function is as follows. Catalyzes the methylthiolation of an aspartic acid residue of ribosomal protein uS12. This chain is Ribosomal protein uS12 methylthiotransferase RimO, found in Sphingopyxis alaskensis (strain DSM 13593 / LMG 18877 / RB2256) (Sphingomonas alaskensis).